We begin with the raw amino-acid sequence, 117 residues long: Large ribosomal subunit protein bL19 (117 aa).

It belongs to the bacterial ribosomal protein bL19 family.

Its function is as follows. This protein is located at the 30S-50S ribosomal subunit interface and may play a role in the structure and function of the aminoacyl-tRNA binding site. The sequence is that of Large ribosomal subunit protein bL19 from Rhodopirellula baltica (strain DSM 10527 / NCIMB 13988 / SH1).